We begin with the raw amino-acid sequence, 255 residues long: Glucanase inhibitor protein 4 (255 aa).

The signal sequence occupies residues 1–21 (MKSITTASFALILFGVGAASA). The region spanning 29-255 (VLGGGAVPSG…ESLGMDQLGH (227 aa)) is the Peptidase S1 domain. Cys56 and Cys72 are joined by a disulfide. N-linked (GlcNAc...) asparagine glycans are attached at residues Asn90, Asn105, Asn110, and Asn160. Cystine bridges form between Cys180/Cys192 and Cys202/Cys235.

The protein belongs to the peptidase S1 family. Forms an apoplastic complex with host endoglucanases in tomato leaves during P.infestans infection.

The protein resides in the secreted. In terms of biological role, secreted effector that suppresses host plant glucan elicitor-mediated defense responses. Targets host endoglucanases and inhibits the endoglucanase-mediated release of elicitor-active glucan oligosaccharides from P.infestans cell walls. This chain is Glucanase inhibitor protein 4, found in Phytophthora infestans (Potato late blight agent).